Reading from the N-terminus, the 2251-residue chain is U3 small nucleolar RNA-associated protein 10 (2251 aa).

One copy of the HEAT repeat lies at 945-983 (VVPLLLTALADAEAAIRLAAIACLAHILAICKYAGDLAK). The next 2 helical transmembrane spans lie at 962 to 982 (LAAI…GDLA) and 1460 to 1480 (LLVD…LLVD).

This sequence belongs to the HEATR1/UTP10 family. In terms of assembly, component of the ribosomal small subunit (SSU) processome.

It localises to the nucleus. It is found in the nucleolus. The protein localises to the membrane. In terms of biological role, involved in nucleolar processing of pre-18S ribosomal RNA. Involved in ribosome biosynthesis. The protein is U3 small nucleolar RNA-associated protein 10 of Mycosarcoma maydis (Corn smut fungus).